Here is a 172-residue protein sequence, read N- to C-terminus: NAD(P)H-quinone oxidoreductase subunit I, chloroplastic (172 aa).

4Fe-4S ferredoxin-type domains lie at 55–84 (GRIH…VDWK) and 95–124 (LNYS…MTEE). [4Fe-4S] cluster contacts are provided by cysteine 64, cysteine 67, cysteine 70, cysteine 74, cysteine 104, cysteine 107, cysteine 110, and cysteine 114.

Belongs to the complex I 23 kDa subunit family. NDH is composed of at least 16 different subunits, 5 of which are encoded in the nucleus. The cofactor is [4Fe-4S] cluster.

It localises to the plastid. Its subcellular location is the chloroplast thylakoid membrane. It catalyses the reaction a plastoquinone + NADH + (n+1) H(+)(in) = a plastoquinol + NAD(+) + n H(+)(out). The enzyme catalyses a plastoquinone + NADPH + (n+1) H(+)(in) = a plastoquinol + NADP(+) + n H(+)(out). Functionally, NDH shuttles electrons from NAD(P)H:plastoquinone, via FMN and iron-sulfur (Fe-S) centers, to quinones in the photosynthetic chain and possibly in a chloroplast respiratory chain. The immediate electron acceptor for the enzyme in this species is believed to be plastoquinone. Couples the redox reaction to proton translocation, and thus conserves the redox energy in a proton gradient. This Crucihimalaya wallichii (Rock-cress) protein is NAD(P)H-quinone oxidoreductase subunit I, chloroplastic.